The chain runs to 228 residues: Aquaporin Z (228 aa).

A run of 2 helical transmembrane segments spans residues 1-21 (MLNKLSAEFFGTFWLVFGGCG) and 23-43 (AILAAAFPELGIGFLGVALAF). The NPA 1 motif lies at 63–65 (NPA). 3 consecutive transmembrane segments (helical) span residues 82-102 (IPYWVAQVLGAIAAAAILYVI), 129-149 (MMAGLLIEIILTAFFIIIILG), and 154-174 (LAPAGFAPIAIGFGLTLIHLV). Positions 184 to 186 (NPA) match the NPA 2 motif. Residues 205–225 (LFWVAPLVGAVIGAIIWKGLL) traverse the membrane as a helical segment.

This sequence belongs to the MIP/aquaporin (TC 1.A.8) family. As to quaternary structure, homotetramer.

Its subcellular location is the cell inner membrane. The enzyme catalyses H2O(in) = H2O(out). In terms of biological role, channel that permits osmotically driven movement of water in both directions. It is involved in the osmoregulation and in the maintenance of cell turgor during volume expansion in rapidly growing cells. It mediates rapid entry or exit of water in response to abrupt changes in osmolarity. In Brucella abortus biovar 1 (strain 9-941), this protein is Aquaporin Z.